Reading from the N-terminus, the 333-residue chain is uncharacterized protein (333 aa).

Positions 45-318 constitute a Fe/B12 periplasmic-binding domain; sequence NVIVSDSMFI…EYVKIIHPKI (274 aa).

This is an uncharacterized protein from Methanocaldococcus jannaschii (strain ATCC 43067 / DSM 2661 / JAL-1 / JCM 10045 / NBRC 100440) (Methanococcus jannaschii).